The primary structure comprises 474 residues: MFTKAEDVLRYIRDEDVQFIDVRFCDLPGIMQHFTIPTQVFAESVFTDGLMFDGSSIRGFQAIHESDMLLLPDPQTAFVDPFREHKTLAMTFFIHDPITKEQYSRDPRNIAKKAETYLRGTSIADTAYFGPEAEFYIFDDVRYDYNPYGSMHHVDSVEAAWNTSRKEEGGNLGYKPRFKGGYFPVPPTDHFTDLRSEMTRVLYETGITVEMQHHEVGTAGQAEIDIRYDTLLKTADNLMLYKYVIRNVARSRGKTVTFMPKPLFEDNGSGMHVHSSLWKDGEPLFYSPNGYGGLSDTARYYIGGLLHHAPALLAFTNPTTNSYRRLVPGYEAPVNLVYSARNRSACCRIPLGGDSPKAKRVEFRVPDPSCNPYLAFAAMLMAGLDGIRNKIDPPDPIDKDLYELPPDELAAVPQVPGSLEKVLDALEADNDFLREGDVFTTDLIETWLEYKRLNEVDAIRLRPHPYEFTLYYDI.

Positions 15 to 99 (EDVQFIDVRF…MTFFIHDPIT (85 aa)) constitute a GS beta-grasp domain. The GS catalytic domain occupies 107 to 474 (PRNIAKKAET…PYEFTLYYDI (368 aa)). The Mg(2+) site is built by E132 and E134. E210 lines the ATP pocket. Mg(2+)-binding residues include E215 and E223. Residues 267–268 (NG) and G268 each bind L-glutamate. Residue H272 participates in Mg(2+) binding. ATP is bound by residues 274 to 276 (HSS) and S276. L-glutamate-binding residues include R325, E331, and R343. R343, R348, and K357 together coordinate ATP. E362 is a Mg(2+) binding site. R364 is a binding site for L-glutamate. The residue at position 402 (Y402) is an O-AMP-tyrosine.

Belongs to the glutamine synthetase family. In terms of assembly, oligomer of 12 subunits arranged in the form of two hexagons. It depends on Mg(2+) as a cofactor.

The protein localises to the cytoplasm. The catalysed reaction is L-glutamate + NH4(+) + ATP = L-glutamine + ADP + phosphate + H(+). Its activity is regulated as follows. The activity of this enzyme could be controlled by adenylation under conditions of abundant glutamine. Catalyzes the ATP-dependent biosynthesis of glutamine from glutamate and ammonia. The sequence is that of Glutamine synthetase from Frankia alni.